Consider the following 881-residue polypeptide: DNA mismatch repair protein MutS (881 aa).

An ATP-binding site is contributed by 627-634; it reads GPNMGGKS.

It belongs to the DNA mismatch repair MutS family.

Its function is as follows. This protein is involved in the repair of mismatches in DNA. It is possible that it carries out the mismatch recognition step. This protein has a weak ATPase activity. In Acinetobacter baumannii (strain AB307-0294), this protein is DNA mismatch repair protein MutS.